Reading from the N-terminus, the 118-residue chain is UPF0148 protein LS215_1455 (118 aa).

Belongs to the UPF0148 family.

This chain is UPF0148 protein LS215_1455, found in Saccharolobus islandicus (strain L.S.2.15 / Lassen #1) (Sulfolobus islandicus).